The sequence spans 576 residues: Proline--tRNA ligase (576 aa).

Belongs to the class-II aminoacyl-tRNA synthetase family. ProS type 1 subfamily. In terms of assembly, homodimer.

The protein resides in the cytoplasm. It catalyses the reaction tRNA(Pro) + L-proline + ATP = L-prolyl-tRNA(Pro) + AMP + diphosphate. Its function is as follows. Catalyzes the attachment of proline to tRNA(Pro) in a two-step reaction: proline is first activated by ATP to form Pro-AMP and then transferred to the acceptor end of tRNA(Pro). As ProRS can inadvertently accommodate and process non-cognate amino acids such as alanine and cysteine, to avoid such errors it has two additional distinct editing activities against alanine. One activity is designated as 'pretransfer' editing and involves the tRNA(Pro)-independent hydrolysis of activated Ala-AMP. The other activity is designated 'posttransfer' editing and involves deacylation of mischarged Ala-tRNA(Pro). The misacylated Cys-tRNA(Pro) is not edited by ProRS. The chain is Proline--tRNA ligase from Bordetella petrii (strain ATCC BAA-461 / DSM 12804 / CCUG 43448).